Here is a 491-residue protein sequence, read N- to C-terminus: Glucose-6-phosphate 1-dehydrogenase (491 aa).

NADP(+)-binding residues include arginine 51 and lysine 150. Substrate contacts are provided by histidine 180, lysine 184, glutamate 218, and aspartate 237. Histidine 242 (proton acceptor) is an active-site residue. Lysine 341 provides a ligand contact to substrate.

The protein belongs to the glucose-6-phosphate dehydrogenase family.

It carries out the reaction D-glucose 6-phosphate + NADP(+) = 6-phospho-D-glucono-1,5-lactone + NADPH + H(+). It participates in carbohydrate degradation; pentose phosphate pathway; D-ribulose 5-phosphate from D-glucose 6-phosphate (oxidative stage): step 1/3. Catalyzes the oxidation of glucose 6-phosphate to 6-phosphogluconolactone. This Rhizobium meliloti (strain 1021) (Ensifer meliloti) protein is Glucose-6-phosphate 1-dehydrogenase.